We begin with the raw amino-acid sequence, 249 residues long: 2,3-bisphosphoglycerate-dependent phosphoglycerate mutase (249 aa).

Substrate-binding positions include 8-15, 21-22, Arg-60, 87-90, Lys-98, 114-115, and 183-184; these read RHGQSAWN, TG, ERHY, RR, and GN. The active-site Tele-phosphohistidine intermediate is the His-9. Glu-87 acts as the Proton donor/acceptor in catalysis. Residues 115-137 are disordered; the sequence is RSYDTPPPPLPADDPRSPAGDAR.

It belongs to the phosphoglycerate mutase family. BPG-dependent PGAM subfamily. As to quaternary structure, homodimer.

The catalysed reaction is (2R)-2-phosphoglycerate = (2R)-3-phosphoglycerate. It participates in carbohydrate degradation; glycolysis; pyruvate from D-glyceraldehyde 3-phosphate: step 3/5. In terms of biological role, catalyzes the interconversion of 2-phosphoglycerate and 3-phosphoglycerate. This Nitratidesulfovibrio vulgaris (strain DSM 19637 / Miyazaki F) (Desulfovibrio vulgaris) protein is 2,3-bisphosphoglycerate-dependent phosphoglycerate mutase.